The chain runs to 374 residues: uncharacterized protein (374 aa).

Positions 86 to 104 are enriched in low complexity; that stretch reads RPAATAGTTPATGASGSAR. The segment at 86 to 109 is disordered; the sequence is RPAATAGTTPATGASGSARPTDAA. The Macro domain maps to 179 to 354; that stretch reads WWRRSNTTRG…LQRVVFAVHG (176 aa).

This is an uncharacterized protein from Mycobacterium tuberculosis (strain CDC 1551 / Oshkosh).